A 420-amino-acid polypeptide reads, in one-letter code: Glycogen synthase kinase-3 beta (420 aa).

Over residues 1 to 24 the composition is skewed to polar residues; sequence MSGRPRTTSFAESCKPVQQPSSFG. The disordered stretch occupies residues 1–50; sequence MSGRPRTTSFAESCKPVQQPSSFGSMKVSRDKDGSKVTTVVATPGQGPDR. Residues 56–340 form the Protein kinase domain; that stretch reads YTDTKVIGNG…PLDACAHSFF (285 aa). ATP contacts are provided by residues 62 to 70 and K85; that span reads IGNGSFGVV. The Proton acceptor role is filled by D181. The interval 384 to 420 is disordered; the sequence is NQAAVSTTSNTTSTSDSNTGERGSTNNAASASASNSS. Composition is skewed to low complexity over residues 389–401 and 409–420; these read STTS…SDSN and NNAASASASNSS.

The protein belongs to the protein kinase superfamily. CMGC Ser/Thr protein kinase family. GSK-3 subfamily. In terms of processing, phosphorylated. Activated by phosphorylation at Tyr-216.

The protein localises to the cytoplasm. The protein resides in the nucleus. It localises to the cell membrane. It carries out the reaction L-seryl-[tau protein] + ATP = O-phospho-L-seryl-[tau protein] + ADP + H(+). It catalyses the reaction L-threonyl-[tau protein] + ATP = O-phospho-L-threonyl-[tau protein] + ADP + H(+). In terms of biological role, plays a role in the organization of the formation of the main body axis of developing embryo. Acts as an inhibitor of differentiation of primary neurons. Inhibits the ability of ectopically expressed NEUROD1 and other bHLH factors to promote early retinal cell differentiation. May participate in the Wnt signaling pathway. May regulate the circadian clock via phosphorylation of the major clock components. The protein is Glycogen synthase kinase-3 beta (gsk3b) of Xenopus laevis (African clawed frog).